Reading from the N-terminus, the 396-residue chain is Ribosomal RNA large subunit methyltransferase I (396 aa).

In terms of domain architecture, PUA spans Ser-2 to Arg-81.

This sequence belongs to the methyltransferase superfamily. RlmI family.

Its subcellular location is the cytoplasm. The catalysed reaction is cytidine(1962) in 23S rRNA + S-adenosyl-L-methionine = 5-methylcytidine(1962) in 23S rRNA + S-adenosyl-L-homocysteine + H(+). In terms of biological role, specifically methylates the cytosine at position 1962 (m5C1962) of 23S rRNA. The protein is Ribosomal RNA large subunit methyltransferase I of Escherichia coli O1:K1 / APEC.